The chain runs to 58 residues: 6.4 kDa protein (58 aa).

The chain is 6.4 kDa protein from Pseudomonas phage Pf3 (Bacteriophage Pf3).